The following is a 465-amino-acid chain: Uronate isomerase (465 aa).

The protein belongs to the metallo-dependent hydrolases superfamily. Uronate isomerase family.

It carries out the reaction D-glucuronate = D-fructuronate. It catalyses the reaction aldehydo-D-galacturonate = keto-D-tagaturonate. The protein operates within carbohydrate metabolism; pentose and glucuronate interconversion. This is Uronate isomerase from Streptococcus equi subsp. zooepidemicus (strain MGCS10565).